The sequence spans 137 residues: Small ribosomal subunit protein bS16m (137 aa).

The N-terminal 34 residues, Met-1 to Ile-34, are a transit peptide targeting the mitochondrion. A Phosphothreonine modification is found at Thr-130.

The protein belongs to the bacterial ribosomal protein bS16 family. In terms of assembly, component of the mitochondrial small ribosomal subunit (mt-SSU). Mature mammalian 55S mitochondrial ribosomes consist of a small (28S) and a large (39S) subunit. The 28S small subunit contains a 12S ribosomal RNA (12S mt-rRNA) and 30 different proteins. The 39S large subunit contains a 16S rRNA (16S mt-rRNA), a copy of mitochondrial valine transfer RNA (mt-tRNA(Val)), which plays an integral structural role, and 52 different proteins. bS16m has a zinc binding site.

It is found in the mitochondrion. The polypeptide is Small ribosomal subunit protein bS16m (MRPS16) (Homo sapiens (Human)).